The primary structure comprises 224 residues: Ras-related protein Rab-32C (224 aa).

The interval 1–22 is disordered; sequence MYSNKNDKDKDKDQNNENNKNN. 35–42 is a GTP binding site; the sequence is GKLACGKT. Positions 57 to 65 match the Effector region motif; sequence YKPTIGVDF. Residues 83–87 and 142–145 contribute to the GTP site; these read DIAGQ and NKCD. The segment at 203–224 is disordered; it reads GFKLSDQSQSTETTPTQSKTCC. Positions 209 to 224 are enriched in low complexity; that stretch reads QSQSTETTPTQSKTCC. Residues Cys223 and Cys224 are each lipidated (S-geranylgeranyl cysteine).

Belongs to the small GTPase superfamily. Rab family.

The protein is Ras-related protein Rab-32C (rab32C) of Dictyostelium discoideum (Social amoeba).